Reading from the N-terminus, the 337-residue chain is Basic membrane protein A2 (337 aa).

The signal sequence occupies residues 1–17 (MNKLLLLILFECIIFLS). Residue C18 is the site of N-palmitoyl cysteine attachment. Residue C18 is the site of S-diacylglycerol cysteine attachment.

This sequence belongs to the BMP lipoprotein family. As to quaternary structure, monomer.

The protein resides in the cell inner membrane. Immunogenic protein. May be part of an ABC-type nucleoside uptake system involved in the purine salvage pathway. In Borrelia garinii subsp. bavariensis (strain ATCC BAA-2496 / DSM 23469 / PBi) (Borreliella bavariensis), this protein is Basic membrane protein A2 (bmpA2).